A 500-amino-acid chain; its full sequence is Perfringolysin O (500 aa).

A signal peptide spans Met-1–Ser-28. Beta stranded transmembrane passes span Lys-189–Val-202, Val-209–Glu-218, Ser-287–Ala-296, and Lys-304–Ser-316. Residues Glu-458 to Arg-468 carry the Conserved undecapeptide motif. Residues Thr-490–Leu-491 carry the Cholesterol binding motif.

Belongs to the cholesterol-dependent cytolysin family. Homooligomeric pore complex of 35 to 50 subunits; when inserted in the host membrane.

Its subcellular location is the secreted. The protein resides in the host cell membrane. A cholesterol-dependent toxin that causes cytolysis by forming pores in cholesterol containing host membranes. After binding to target membranes, the protein assembles into a pre-pore complex. A conformation change leads to insertion in the host membrane and formation of an oligomeric pore complex. Cholesterol is required for binding to host cell membranes, membrane insertion and pore formation; cholesterol binding is mediated by a Thr-Leu pair in the C-terminus. Can be reversibly inactivated by oxidation. In Clostridium perfringens (strain ATCC 13124 / DSM 756 / JCM 1290 / NCIMB 6125 / NCTC 8237 / Type A), this protein is Perfringolysin O (pfo).